A 142-amino-acid chain; its full sequence is Large ribosomal subunit protein uL11 (142 aa).

Belongs to the universal ribosomal protein uL11 family. In terms of assembly, part of the ribosomal stalk of the 50S ribosomal subunit. Interacts with L10 and the large rRNA to form the base of the stalk. L10 forms an elongated spine to which L12 dimers bind in a sequential fashion forming a multimeric L10(L12)X complex. In terms of processing, one or more lysine residues are methylated.

Forms part of the ribosomal stalk which helps the ribosome interact with GTP-bound translation factors. The chain is Large ribosomal subunit protein uL11 from Shewanella piezotolerans (strain WP3 / JCM 13877).